Here is a 170-residue protein sequence, read N- to C-terminus: Neurotensin/neuromedin N (170 aa).

A signal peptide spans 1-23 (MMAGMKIQLVCMILLAFSSWSLC).

The protein belongs to the neurotensin family. Interacts with NTSR1. Interacts with SORT1. Interacts with SORL1. In terms of processing, neurotensin is cleaved and degraded by Angiotensin-converting enzyme (ACE) and neprilysin (MME). In terms of tissue distribution, brain and gut.

It localises to the secreted. The protein resides in the cytoplasmic vesicle. The protein localises to the secretory vesicle. Neurotensin may play an endocrine or paracrine role in the regulation of fat metabolism. It causes contraction of smooth muscle. The protein is Neurotensin/neuromedin N (NTS) of Bos taurus (Bovine).